The primary structure comprises 292 residues: Nitrogenase iron protein (292 aa).

Residue 8–15 (GKGGIGKS) coordinates ATP. Cys-96 contacts [4Fe-4S] cluster. ADP-ribosylarginine; by dinitrogenase reductase ADP-ribosyltransferase is present on Arg-99. Cys-130 provides a ligand contact to [4Fe-4S] cluster.

Belongs to the NifH/BchL/ChlL family. Homodimer. The cofactor is [4Fe-4S] cluster. In terms of processing, the reversible ADP-ribosylation of Arg-99 inactivates the nitrogenase reductase and regulates nitrogenase activity.

The catalysed reaction is N2 + 8 reduced [2Fe-2S]-[ferredoxin] + 16 ATP + 16 H2O = H2 + 8 oxidized [2Fe-2S]-[ferredoxin] + 2 NH4(+) + 16 ADP + 16 phosphate + 6 H(+). In terms of biological role, the key enzymatic reactions in nitrogen fixation are catalyzed by the nitrogenase complex, which has 2 components: the iron protein and the molybdenum-iron protein. The polypeptide is Nitrogenase iron protein (Synechococcus sp. (strain JA-3-3Ab) (Cyanobacteria bacterium Yellowstone A-Prime)).